A 779-amino-acid chain; its full sequence is Endonuclease MutS2 (779 aa).

Position 328 to 335 (Gly-328 to Thr-335) interacts with ATP. Residues Leu-704–Gly-779 enclose the Smr domain.

Belongs to the DNA mismatch repair MutS family. MutS2 subfamily. In terms of assembly, homodimer. Binds to stalled ribosomes, contacting rRNA.

Its function is as follows. Endonuclease that is involved in the suppression of homologous recombination and thus may have a key role in the control of bacterial genetic diversity. In terms of biological role, acts as a ribosome collision sensor, splitting the ribosome into its 2 subunits. Detects stalled/collided 70S ribosomes which it binds and splits by an ATP-hydrolysis driven conformational change. Acts upstream of the ribosome quality control system (RQC), a ribosome-associated complex that mediates the extraction of incompletely synthesized nascent chains from stalled ribosomes and their subsequent degradation. Probably generates substrates for RQC. This chain is Endonuclease MutS2, found in Streptococcus agalactiae serotype Ia (strain ATCC 27591 / A909 / CDC SS700).